We begin with the raw amino-acid sequence, 798 residues long: uncharacterized protein (798 aa).

Positions 1 to 13 (MSSSQSPSTPSAS) are enriched in low complexity. The N-terminal 58 residues, 1 to 58 (MSSSQSPSTPSASLVDSSDSKHPDDLPQIYKRRSVWTSSEDAVSSSNSPEQTTPFTVR), are a transit peptide targeting the chloroplast. 3 disordered regions span residues 1–99 (MSSS…WQDA), 135–158 (AEKK…SMCT), and 417–473 (TGLI…AEPS). The span at 35–55 (VWTSSEDAVSSSNSPEQTTPF) shows a compositional bias: polar residues. The span at 57 to 79 (VREDTNADIARELDLPDDPEPHL) shows a compositional bias: basic and acidic residues. Residues 137–146 (KKKRKKKKKA) show a composition bias toward basic residues. A compositionally biased stretch (low complexity) spans 462 to 473 (AAPAEAQGAEPS). The stretch at 578 to 658 (RSNMEVAGKL…MLSEARGLRD (81 aa)) forms a coiled coil. The interval 749-798 (DDLKAPAPEPAPLSPGGHRSVESLADEAGITDQAGSLLPAKDNRPSEDLD) is disordered. Ser762 is subject to Phosphoserine. Over residues 789–798 (KDNRPSEDLD) the composition is skewed to basic and acidic residues.

The protein localises to the plastid. The protein resides in the chloroplast. This is an uncharacterized protein from Arabidopsis thaliana (Mouse-ear cress).